The following is a 221-amino-acid chain: Transcriptional regulator GfcR (221 aa).

The disordered stretch occupies residues 35 to 59 (ASWLVERSQPTDNSQSSSANNPTEA). The segment covering 42-57 (SQPTDNSQSSSANNPT) has biased composition (polar residues).

The protein belongs to the purine/pyrimidine phosphoribosyltransferase family. GfcR subfamily.

Functionally, DNA-binding transcriptional regulator that functions as a regulator of central sugar catabolic pathways. This chain is Transcriptional regulator GfcR, found in Haloquadratum walsbyi (strain DSM 16790 / HBSQ001).